The chain runs to 300 residues: Tyrosine recombinase XerC (300 aa).

Positions 1 to 86 constitute a Core-binding (CB) domain; it reads MESVLDAFDQ…AVKTFTAWAV (86 aa). The 188-residue stretch at 107 to 294 folds into the Tyr recombinase domain; it reads TLPAVLRQDQ…TVARLRAVHD (188 aa). Residues Arg151, Lys175, His246, Arg249, and His272 contribute to the active site. Residue Tyr281 is the O-(3'-phospho-DNA)-tyrosine intermediate of the active site.

It belongs to the 'phage' integrase family. XerC subfamily. In terms of assembly, forms a cyclic heterotetrameric complex composed of two molecules of XerC and two molecules of XerD.

The protein localises to the cytoplasm. Functionally, site-specific tyrosine recombinase, which acts by catalyzing the cutting and rejoining of the recombining DNA molecules. The XerC-XerD complex is essential to convert dimers of the bacterial chromosome into monomers to permit their segregation at cell division. It also contributes to the segregational stability of plasmids. In Mycobacterium sp. (strain JLS), this protein is Tyrosine recombinase XerC.